A 497-amino-acid polypeptide reads, in one-letter code: FAD-linked oxidoreductase fmqD (497 aa).

The first 17 residues, 1–17 (MQYIPFLISGLVPVALS), serve as a signal peptide directing secretion. The FAD-binding PCMH-type domain occupies 68 to 243 (NDPSYVATVK…TSATYRIYDQ (176 aa)). N-linked (GlcNAc...) asparagine glycosylation is found at Asn99, Asn261, and Asn288.

This sequence belongs to the oxygen-dependent FAD-linked oxidoreductase family.

It is found in the secreted. It localises to the cell wall. It participates in alkaloid biosynthesis. Its function is as follows. FAD-linked oxidoreductase; part of the gene cluster that mediates the biosynthesis of the antitumor fumiquinazolines that confer a dual-usage capability to defend against phagocytes in the environment and animal hosts. The simplest member is fumiquinazoline F (FQF) with a 6-6-6 tricyclic core derived from anthranilic acid (Ant), tryptophan (Trp), and alanine (Ala). The trimodular NRPS fmqA is responsible for FQF formation. Modules 1, 2 and 3 of fmqA are predicted to activate and load Ant, Trp and Ala, respectively, providing for the assembly of an Ant-Trp-Ala-S-enzyme intermediate that would undergo double cyclization for chain release and generation of the tricyclic 6-6-6 product fumiquinazoline F. The presence of an E domain predicted for module 2 of fmqA is consistent with epimerization of L-Trp to D-Trp during assembly to generate the R-stereocenter at C14 of FQF. The FAD-dependent monooxygenase fmqB and the monomodular NRPS fmqC then maturate FQF to FQA. FmqB oxidizes the 2',3'-double bond of the indole side chain of FQF, and fmqC activates L-Ala as the adenylate, installs it as the pantetheinyl thioester on its carrier protein domain, and acylates the oxidized indole for subsequent intramolecular cyclization to create the 6-5-5-imidazolindolone of FQA. The FAD-linked oxidoreductase fmqD introduces a third layer of scaffold complexity by converting FQA to the spirohemiaminal FQC, presumably by catalyzing the formation of a transient imine within the pyrazinone ring. FQC subsequently converts nonenzymatically to the known cyclic aminal FQD. The sequence is that of FAD-linked oxidoreductase fmqD from Aspergillus fumigatus (strain ATCC MYA-4609 / CBS 101355 / FGSC A1100 / Af293) (Neosartorya fumigata).